Reading from the N-terminus, the 363-residue chain is MAVLDLNLTTVIDSGFMESDRSVRVLTGCFLSVLILSTLLGNTLVCAAVTKFRHLRSKVTNFFVISLAVSDLLVAVLVMPWKAVTEVAGFWPFGAFCDIWVAFDIMCSTASILNLCVISVDRYWAISSPFRYERKMTPRVAFVMISGAWTLSVLISFIPVQLKWHKAQPIGFLEVNASRRDLPTDNCDSSLNRTYAISSSLISFYIPVAIMIVTYTQIYRIAQKQIRRISALERAAESAQIRHDSMGSGSNMDLESSFKLSFKRETKVLKTLSVIMGVFVCCWLPFFILNCMVPFCKRTSNGLPCISPTTFDVFVWFGWANSSLNPIIYAFNADFRRAFAILLGCQRLCPGSISMETPSLNKN.

Topologically, residues Met1–Arg24 are extracellular. Residue Asn7 is glycosylated (N-linked (GlcNAc...) asparagine). A helical transmembrane segment spans residues Val25–Val45. At Cys46–Asn61 the chain is on the cytoplasmic side. Residues Phe62–Trp81 traverse the membrane as a helical segment. Topologically, residues Lys82 to Asp98 are extracellular. A disulfide bridge connects residues Cys97 and Cys187. Residues Ile99–Val120 traverse the membrane as a helical segment. Residues Asp121–Arg139 lie on the Cytoplasmic side of the membrane. The helical transmembrane segment at Val140–Trp164 threads the bilayer. The Extracellular segment spans residues His165–Thr194. The helical transmembrane segment at Tyr195–Tyr219 threads the bilayer. Topologically, residues Arg220–Thr271 are cytoplasmic. Residues Leu272–Lys297 traverse the membrane as a helical segment. At Arg298–Thr310 the chain is on the extracellular side. Residues Phe311–Ala330 form a helical membrane-spanning segment. Topologically, residues Phe331–Asn363 are cytoplasmic. Residue Cys345 is the site of S-palmitoyl cysteine attachment.

The protein belongs to the G-protein coupled receptor 1 family. In terms of tissue distribution, retina.

The protein resides in the cell membrane. It localises to the cell projection. Its subcellular location is the cilium membrane. Its function is as follows. Dopamine receptor whose activity is mediated by G proteins which activate adenylyl cyclase. Could be involved in growth hormone release. This is D(1) dopamine receptor from Carassius auratus (Goldfish).